The sequence spans 424 residues: L-glutamine:2-deoxy-scyllo-inosose aminotransferase (424 aa).

Lys202 bears the N6-(pyridoxal phosphate)lysine mark.

It belongs to the DegT/DnrJ/EryC1 family. L-glutamine:2-deoxy-scyllo-inosose/scyllo-inosose aminotransferase subfamily. It depends on pyridoxal 5'-phosphate as a cofactor.

The enzyme catalyses 2-deoxy-L-scyllo-inosose + L-glutamine = 2-deoxy-scyllo-inosamine + 2-oxoglutaramate. It carries out the reaction 3-amino-2,3-dideoxy-scyllo-inosose + L-glutamine = 2-deoxystreptamine + 2-oxoglutaramate. It functions in the pathway metabolic intermediate biosynthesis; 2-deoxystreptamine biosynthesis; 2-deoxystreptamine from D-glucose 6-phosphate: step 2/4. Its pathway is metabolic intermediate biosynthesis; 2-deoxystreptamine biosynthesis; 2-deoxystreptamine from D-glucose 6-phosphate: step 4/4. The protein operates within antibiotic biosynthesis; neomycin biosynthesis. Functionally, catalyzes the PLP-dependent transamination of 2-deoxy-scyllo-inosose (2-DOI) to form 2-deoxy-scyllo-inosamine (2-DOIA) using L-glutamine as the amino donor. Also catalyzes the transamination of 3-amino-2,3-dideoxy-scyllo-inosose (keto-2-DOIA) into 2-deoxystreptamine (2-DOS). In Streptomyces fradiae (Streptomyces roseoflavus), this protein is L-glutamine:2-deoxy-scyllo-inosose aminotransferase (neoB).